Consider the following 104-residue polypeptide: Cell division protein FtsB (104 aa).

Residues 1–3 (MGK) lie on the Cytoplasmic side of the membrane. Residues 4–21 (LTLLLLVLLGWLQYSLWL) traverse the membrane as a helical segment. Residues 22 to 104 (GKNGIHDYTR…NAQQGRPASQ (83 aa)) are Periplasmic-facing. Residues 33 to 62 (DEDVASQQGNNAKLKARNDRLFAEIDDLNG) adopt a coiled-coil conformation.

This sequence belongs to the FtsB family. In terms of assembly, part of a complex composed of FtsB, FtsL and FtsQ.

Its subcellular location is the cell inner membrane. Its function is as follows. Essential cell division protein. May link together the upstream cell division proteins, which are predominantly cytoplasmic, with the downstream cell division proteins, which are predominantly periplasmic. This Erwinia tasmaniensis (strain DSM 17950 / CFBP 7177 / CIP 109463 / NCPPB 4357 / Et1/99) protein is Cell division protein FtsB.